The primary structure comprises 458 residues: MLQVDVVILAAGMGKRMCSSLPKVLHPLAGKPILSHVLDIARTLSPERICVVFGYGGELVRQVIGDHSDLIWVKQAQQLGTGHAVKQALPYLGNKGVTLVLFGDVPLVKSDTLKALIEKAREDNLVLLTVELDNPTGYGRIVRDPVTNRIQAIVEEKDASQSQKKIREINTGIMVLPNGRLGNWLDNLSDANTQGEYYLTDIIAMAVDAGIPIETSSPASDWEVSGVNDKIQLSILERAHQQDTANRLMEQGVMFADPARFDVRGRLVCGNDVEIDINCIFEGNVRLGNNVKIHANCILRNVIVSDGSVVHPFSLIEDAEVGKNCRIGPYARIRPGTQLDDAVHVGNFVEIKNSHIASESKVNHLSYVGDTEMGRRVNIGAGAITCNYDGAFKHRTVIEDDVFIGSDTQLVAPVTVARGSTIGAGSTITRDTPEGQLTLSRTKQTSIANWKRPRKDRN.

Positions 1 to 230 are pyrophosphorylase; that stretch reads MLQVDVVILA…DWEVSGVNDK (230 aa). UDP-N-acetyl-alpha-D-glucosamine contacts are provided by residues 9-12, K23, Q75, and 80-81; these read LAAG and GT. D104 serves as a coordination point for Mg(2+). Positions 139, 155, 170, and 228 each coordinate UDP-N-acetyl-alpha-D-glucosamine. N228 is a Mg(2+) binding site. Positions 231 to 251 are linker; the sequence is IQLSILERAHQQDTANRLMEQ. The N-acetyltransferase stretch occupies residues 252–458; sequence GVMFADPARF…NWKRPRKDRN (207 aa). Residues R334 and K352 each coordinate UDP-N-acetyl-alpha-D-glucosamine. H364 (proton acceptor) is an active-site residue. Residues Y367 and N378 each coordinate UDP-N-acetyl-alpha-D-glucosamine. Residues A381, 387–388, S406, A424, and R441 each bind acetyl-CoA; that span reads NY.

The protein in the N-terminal section; belongs to the N-acetylglucosamine-1-phosphate uridyltransferase family. In the C-terminal section; belongs to the transferase hexapeptide repeat family. As to quaternary structure, homotrimer. It depends on Mg(2+) as a cofactor.

It is found in the cytoplasm. It carries out the reaction alpha-D-glucosamine 1-phosphate + acetyl-CoA = N-acetyl-alpha-D-glucosamine 1-phosphate + CoA + H(+). It catalyses the reaction N-acetyl-alpha-D-glucosamine 1-phosphate + UTP + H(+) = UDP-N-acetyl-alpha-D-glucosamine + diphosphate. It participates in nucleotide-sugar biosynthesis; UDP-N-acetyl-alpha-D-glucosamine biosynthesis; N-acetyl-alpha-D-glucosamine 1-phosphate from alpha-D-glucosamine 6-phosphate (route II): step 2/2. Its pathway is nucleotide-sugar biosynthesis; UDP-N-acetyl-alpha-D-glucosamine biosynthesis; UDP-N-acetyl-alpha-D-glucosamine from N-acetyl-alpha-D-glucosamine 1-phosphate: step 1/1. The protein operates within bacterial outer membrane biogenesis; LPS lipid A biosynthesis. Its function is as follows. Catalyzes the last two sequential reactions in the de novo biosynthetic pathway for UDP-N-acetylglucosamine (UDP-GlcNAc). The C-terminal domain catalyzes the transfer of acetyl group from acetyl coenzyme A to glucosamine-1-phosphate (GlcN-1-P) to produce N-acetylglucosamine-1-phosphate (GlcNAc-1-P), which is converted into UDP-GlcNAc by the transfer of uridine 5-monophosphate (from uridine 5-triphosphate), a reaction catalyzed by the N-terminal domain. The protein is Bifunctional protein GlmU of Nitrosomonas europaea (strain ATCC 19718 / CIP 103999 / KCTC 2705 / NBRC 14298).